We begin with the raw amino-acid sequence, 716 residues long: Exocyst complex component 8 (716 aa).

Position 15 is a phosphoserine (S15). The disordered stretch occupies residues 129–150; it reads GFLPGPAGVPREGSGTGEEGKQ. One can recognise a PH domain in the interval 173–273; the sequence is YLVYNGDLVE…WLEVLEETKR (101 aa). Basic and acidic residues predominate over residues 275–284; it reads LSDKRRREQE. The disordered stretch occupies residues 275-319; it reads LSDKRRREQEEAAAPRAPPPVTSKGSNPFEDEDDEELATPEAEEE. Acidic residues predominate over residues 303–319; the sequence is FEDEDDEELATPEAEEE. The residue at position 313 (T313) is a Phosphothreonine.

The protein belongs to the EXO84 family. The exocyst complex is composed of EXOC1, EXOC2, EXOC3, EXOC4, EXOC5, EXOC6, EXOC7 and EXOC8. Interacts (via PH domain) with GTP-bound RALA and RALB. Interacts with SH3BP1; required for the localization of both SH3BP1 and the exocyst to the leading edge of migrating cells.

The protein localises to the cytoplasm. It localises to the perinuclear region. The protein resides in the cell projection. It is found in the growth cone. Component of the exocyst complex involved in the docking of exocytic vesicles with fusion sites on the plasma membrane. In Mus musculus (Mouse), this protein is Exocyst complex component 8 (Exoc8).